Here is a 285-residue protein sequence, read N- to C-terminus: Prephenate dehydratase (285 aa).

Residues 2–183 enclose the Prephenate dehydratase domain; the sequence is KVGYLGPAAT…NHTRFVILSP (182 aa). The ACT domain occupies 204–281; the sequence is MVMLPQDDQS…CKVRLLGAYQ (78 aa).

The enzyme catalyses prephenate + H(+) = 3-phenylpyruvate + CO2 + H2O. The protein operates within amino-acid biosynthesis; L-phenylalanine biosynthesis; phenylpyruvate from prephenate: step 1/1. The sequence is that of Prephenate dehydratase (pheA) from Bacillus subtilis (strain 168).